A 59-amino-acid polypeptide reads, in one-letter code: Kunitz-type serine protease inhibitor dendrotoxin E (59 aa).

Positions 7–57 constitute a BPTI/Kunitz inhibitor domain; sequence CKLPAEPGPCKASIPAFYYNWAAKKCQLFHYGGCKGNANRFSTIEKCRHAC. 3 disulfide bridges follow: Cys-7/Cys-57, Cys-16/Cys-40, and Cys-32/Cys-53.

The protein belongs to the venom Kunitz-type family. As to expression, expressed by the venom gland.

It is found in the secreted. Serine protease inhibitor that inhibits trypsin. May also inhibit voltage-gated potassium channels (Kv). Binds transition metal ions such as copper and cobalt. The chain is Kunitz-type serine protease inhibitor dendrotoxin E from Dendroaspis polylepis polylepis (Black mamba).